The following is a 363-amino-acid chain: Phospho-N-acetylmuramoyl-pentapeptide-transferase (363 aa).

10 helical membrane passes run 15 to 33, 82 to 102, 106 to 126, 147 to 167, 183 to 203, 207 to 227, 233 to 253, 260 to 280, 285 to 305, and 341 to 361; these read FTTLFFLITLSLIVNSFIF, NTPTMGGIFIILPLLLLLLIV, FYSMGIILLFFGSLSFFIIGF, FILQSLISILFIVLAYQNGYI, IVIFPICFVTLVGLSNAVNLT, DGLASGCGSIVFYGLGTEIFI, LIIYGLIAYAMSGLCVGFLKF, IFMGDTGSLTIGATLGYISIL, FTLFIISGIFVIEALSVIIQV, and IVENFWKINILLVILGIVLKI.

The protein belongs to the glycosyltransferase 4 family. MraY subfamily. Mg(2+) is required as a cofactor.

Its subcellular location is the cell inner membrane. It carries out the reaction UDP-N-acetyl-alpha-D-muramoyl-L-alanyl-gamma-D-glutamyl-meso-2,6-diaminopimeloyl-D-alanyl-D-alanine + di-trans,octa-cis-undecaprenyl phosphate = di-trans,octa-cis-undecaprenyl diphospho-N-acetyl-alpha-D-muramoyl-L-alanyl-D-glutamyl-meso-2,6-diaminopimeloyl-D-alanyl-D-alanine + UMP. It participates in cell wall biogenesis; peptidoglycan biosynthesis. In terms of biological role, catalyzes the initial step of the lipid cycle reactions in the biosynthesis of the cell wall peptidoglycan: transfers peptidoglycan precursor phospho-MurNAc-pentapeptide from UDP-MurNAc-pentapeptide onto the lipid carrier undecaprenyl phosphate, yielding undecaprenyl-pyrophosphoryl-MurNAc-pentapeptide, known as lipid I. In Prochlorococcus marinus (strain MIT 9515), this protein is Phospho-N-acetylmuramoyl-pentapeptide-transferase.